We begin with the raw amino-acid sequence, 175 residues long: Large ribosomal subunit protein uL10 (175 aa).

This sequence belongs to the universal ribosomal protein uL10 family. As to quaternary structure, part of the ribosomal stalk of the 50S ribosomal subunit. The N-terminus interacts with L11 and the large rRNA to form the base of the stalk. The C-terminus forms an elongated spine to which L12 dimers bind in a sequential fashion forming a multimeric L10(L12)X complex.

Functionally, forms part of the ribosomal stalk, playing a central role in the interaction of the ribosome with GTP-bound translation factors. The sequence is that of Large ribosomal subunit protein uL10 from Psychrobacter cryohalolentis (strain ATCC BAA-1226 / DSM 17306 / VKM B-2378 / K5).